The chain runs to 171 residues: Nicotinamide-nucleotide adenylyltransferase (171 aa).

It belongs to the archaeal NMN adenylyltransferase family.

Its subcellular location is the cytoplasm. The enzyme catalyses beta-nicotinamide D-ribonucleotide + ATP + H(+) = diphosphate + NAD(+). It functions in the pathway cofactor biosynthesis; NAD(+) biosynthesis; NAD(+) from nicotinamide D-ribonucleotide: step 1/1. This chain is Nicotinamide-nucleotide adenylyltransferase, found in Methanococcus maripaludis (strain C5 / ATCC BAA-1333).